Reading from the N-terminus, the 223-residue chain is Neurotrophic factor BDNF precursor form (223 aa).

The signal sequence occupies residues 1 to 5; that stretch reads SCMKA. The propeptide occupies 6 to 114; that stretch reads APMKEVSIRG…AANMSMRVRR (109 aa). Asparagine 107 is a glycosylation site (N-linked (GlcNAc...) asparagine). 2 disulfides stabilise this stretch: cysteine 127/cysteine 194 and cysteine 172/cysteine 223.

The protein belongs to the NGF-beta family.

It localises to the secreted. Promotes the survival of neuronal populations that are all located either in the central nervous system or directly connected to it. This Candoia carinata (Papuan tree boa) protein is Neurotrophic factor BDNF precursor form (BDNF).